A 543-amino-acid polypeptide reads, in one-letter code: Chaperonin GroEL (543 aa).

Residues 29-32 (TLGP), 86-90 (DGTTT), Gly413, 476-478 (NAA), and Asp492 each bind ATP.

The protein belongs to the chaperonin (HSP60) family. Forms a cylinder of 14 subunits composed of two heptameric rings stacked back-to-back. Interacts with the co-chaperonin GroES.

The protein localises to the cytoplasm. It catalyses the reaction ATP + H2O + a folded polypeptide = ADP + phosphate + an unfolded polypeptide.. Its function is as follows. Together with its co-chaperonin GroES, plays an essential role in assisting protein folding. The GroEL-GroES system forms a nano-cage that allows encapsulation of the non-native substrate proteins and provides a physical environment optimized to promote and accelerate protein folding. The protein is Chaperonin GroEL of Brevibacillus choshinensis.